Here is a 250-residue protein sequence, read N- to C-terminus: NAD-dependent protein deacetylase (250 aa).

The 244-residue stretch at 1-244 (MECDKVGDLL…PCVVDYIKSQ (244 aa)) folds into the Deacetylase sirtuin-type domain. The NAD(+) site is built by Ala-22, Thr-26, Phe-33, Arg-34, Gln-98, Ile-100, Asp-101, and His-116. A nicotinamide-binding site is contributed by Phe-33. Residues Ile-100 and Asp-101 each contribute to the nicotinamide site. Catalysis depends on His-116, which acts as the Proton acceptor. Residues Cys-124, Cys-127, Cys-149, and Cys-151 each contribute to the Zn(2+) site. NAD(+) contacts are provided by Ser-187, Ser-188, Asn-212, and Val-230.

This sequence belongs to the sirtuin family. Class U subfamily. Zn(2+) serves as cofactor.

Its subcellular location is the cytoplasm. It carries out the reaction N(6)-acetyl-L-lysyl-[protein] + NAD(+) + H2O = 2''-O-acetyl-ADP-D-ribose + nicotinamide + L-lysyl-[protein]. Its function is as follows. NAD-dependent protein deacetylase which modulates the activities of several enzymes which are inactive in their acetylated form. Deacetylates the N-terminal lysine residue of Alba, the major archaeal chromatin protein and that, in turn, increases Alba's DNA binding affinity, thereby repressing transcription. The protein is NAD-dependent protein deacetylase of Sulfurisphaera tokodaii (strain DSM 16993 / JCM 10545 / NBRC 100140 / 7) (Sulfolobus tokodaii).